The primary structure comprises 144 residues: Large ribosomal subunit protein uL15 (144 aa).

Residues 1–54 are disordered; the sequence is MRLNTLSPAEGSKKAGKRLGRGIGSGLGKTGGRGHKGQNSRSGGGVRRGFEGGQ. The span at 21-31 shows a compositional bias: gly residues; it reads RGIGSGLGKTG.

This sequence belongs to the universal ribosomal protein uL15 family. Part of the 50S ribosomal subunit.

Binds to the 23S rRNA. This Enterobacter sp. (strain 638) protein is Large ribosomal subunit protein uL15.